Consider the following 334-residue polypeptide: Galactinol synthase 4 (334 aa).

The active site involves Lys-104. Residues Asp-120, Asp-122, and His-258 each contribute to the Mn(2+) site.

The protein belongs to the glycosyltransferase 8 family. Galactosyltransferase subfamily. The cofactor is a divalent metal cation.

The protein localises to the cytoplasm. The catalysed reaction is myo-inositol + UDP-alpha-D-galactose = alpha-D-galactosyl-(1-&gt;3)-1D-myo-inositol + UDP + H(+). In terms of biological role, galactinol synthase involved in the biosynthesis of raffinose family oligosaccharides (RFOs) that function as osmoprotectants. May promote plant stress tolerance. This is Galactinol synthase 4 (GOLS4) from Arabidopsis thaliana (Mouse-ear cress).